Here is a 310-residue protein sequence, read N- to C-terminus: tRNA dimethylallyltransferase (310 aa).

14 to 21 lines the ATP pocket; that stretch reads GPTASGKT. 16-21 lines the substrate pocket; it reads TASGKT. 3 interaction with substrate tRNA regions span residues 39 to 42, 163 to 167, and 244 to 249; these read DSAL, QRLSR, and RCVGYR.

The protein belongs to the IPP transferase family. Monomer. Mg(2+) serves as cofactor.

It carries out the reaction adenosine(37) in tRNA + dimethylallyl diphosphate = N(6)-dimethylallyladenosine(37) in tRNA + diphosphate. Catalyzes the transfer of a dimethylallyl group onto the adenine at position 37 in tRNAs that read codons beginning with uridine, leading to the formation of N6-(dimethylallyl)adenosine (i(6)A). The sequence is that of tRNA dimethylallyltransferase from Aeromonas salmonicida (strain A449).